The following is a 130-amino-acid chain: S-adenosylmethionine decarboxylase proenzyme (130 aa).

Residue S66 is the Schiff-base intermediate with substrate; via pyruvic acid of the active site. A Pyruvic acid (Ser); by autocatalysis modification is found at S66. Residue H71 is the Proton acceptor; for processing activity of the active site. The active-site Proton donor; for catalytic activity is the C86.

It belongs to the prokaryotic AdoMetDC family. Type 1 subfamily. Heterotetramer of two alpha and two beta chains arranged as a dimer of alpha/beta heterodimers. Pyruvate serves as cofactor. Post-translationally, is synthesized initially as an inactive proenzyme. Formation of the active enzyme involves a self-maturation process in which the active site pyruvoyl group is generated from an internal serine residue via an autocatalytic post-translational modification. Two non-identical subunits are generated from the proenzyme in this reaction, and the pyruvate is formed at the N-terminus of the alpha chain, which is derived from the carboxyl end of the proenzyme. The post-translation cleavage follows an unusual pathway, termed non-hydrolytic serinolysis, in which the side chain hydroxyl group of the serine supplies its oxygen atom to form the C-terminus of the beta chain, while the remainder of the serine residue undergoes an oxidative deamination to produce ammonia and the pyruvoyl group blocking the N-terminus of the alpha chain.

It carries out the reaction S-adenosyl-L-methionine + H(+) = S-adenosyl 3-(methylsulfanyl)propylamine + CO2. Its pathway is amine and polyamine biosynthesis; S-adenosylmethioninamine biosynthesis; S-adenosylmethioninamine from S-adenosyl-L-methionine: step 1/1. Catalyzes the decarboxylation of S-adenosylmethionine to S-adenosylmethioninamine (dcAdoMet), the propylamine donor required for the synthesis of the polyamines spermine and spermidine from the diamine putrescine. The polypeptide is S-adenosylmethionine decarboxylase proenzyme (Bacillus cereus (strain ATCC 10987 / NRS 248)).